We begin with the raw amino-acid sequence, 348 residues long: UDP-glucose 4-epimerase (348 aa).

Residues 12-14, 33-37, 66-67, Phe-88, and Lys-92 each bind NAD(+); these read GYI, DNFHN, and DI. Position 132–134 (132–134) interacts with substrate; it reads SAT. The active-site Proton acceptor is Tyr-157. NAD(+)-binding residues include Lys-161 and Tyr-185. Residues 185-187, 206-208, 224-226, Arg-239, and 300-303 contribute to the substrate site; these read YFN, NNL, NVF, and REGD.

Belongs to the NAD(P)-dependent epimerase/dehydratase family. As to quaternary structure, homodimer. It depends on NAD(+) as a cofactor.

It catalyses the reaction UDP-alpha-D-glucose = UDP-alpha-D-galactose. The catalysed reaction is UDP-N-acetyl-alpha-D-glucosamine = UDP-N-acetyl-alpha-D-galactosamine. It functions in the pathway carbohydrate metabolism; galactose metabolism. Its function is as follows. Catalyzes two distinct but analogous reactions: the reversible epimerization of UDP-glucose to UDP-galactose and the reversible epimerization of UDP-N-acetylglucosamine to UDP-N-acetylgalactosamine. The reaction with UDP-Gal plays a critical role in the Leloir pathway of galactose catabolism in which galactose is converted to the glycolytic intermediate glucose 6-phosphate. It contributes to the catabolism of dietary galactose and enables the endogenous biosynthesis of both UDP-Gal and UDP-GalNAc when exogenous sources are limited. Both UDP-sugar interconversions are important in the synthesis of glycoproteins and glycolipids. The polypeptide is UDP-glucose 4-epimerase (GALE) (Pongo abelii (Sumatran orangutan)).